The chain runs to 380 residues: Cytochrome b (380 aa).

Transmembrane regions (helical) follow at residues 33–53 (FGSLLGVCLIIQILTGLFLAM), 77–98 (WLIRYLHANGASMFFICLFIHV), 113–133 (WNIGIVLLLTTMATAFVGYVL), and 178–198 (FFAFHFILPFIITALVLVHLL). Heme b contacts are provided by H83 and H97. Positions 182 and 196 each coordinate heme b. H201 provides a ligand contact to a ubiquinone. Transmembrane regions (helical) follow at residues 226-246 (IKDLLGVLLLLMVLTILVLFF), 288-308 (LGGVXALXLSILILXXXPLLN), 320-340 (ITQVLYWIFXXNLXXXXXXXX), and 347-367 (XXXXXQIASICYXAIIIIFMP).

It belongs to the cytochrome b family. As to quaternary structure, the cytochrome bc1 complex contains 11 subunits: 3 respiratory subunits (MT-CYB, CYC1 and UQCRFS1), 2 core proteins (UQCRC1 and UQCRC2) and 6 low-molecular weight proteins (UQCRH/QCR6, UQCRB/QCR7, UQCRQ/QCR8, UQCR10/QCR9, UQCR11/QCR10 and a cleavage product of UQCRFS1). This cytochrome bc1 complex then forms a dimer. Requires heme b as cofactor.

The protein resides in the mitochondrion inner membrane. Its function is as follows. Component of the ubiquinol-cytochrome c reductase complex (complex III or cytochrome b-c1 complex) that is part of the mitochondrial respiratory chain. The b-c1 complex mediates electron transfer from ubiquinol to cytochrome c. Contributes to the generation of a proton gradient across the mitochondrial membrane that is then used for ATP synthesis. This is Cytochrome b (MT-CYB) from Rhipidomys leucodactylus (White-footed climbing mouse).